The sequence spans 150 residues: Arginine repressor (150 aa).

It belongs to the ArgR family.

Its subcellular location is the cytoplasm. The protein operates within amino-acid biosynthesis; L-arginine biosynthesis [regulation]. Regulates arginine biosynthesis genes. This chain is Arginine repressor, found in Clostridium acetobutylicum (strain ATCC 824 / DSM 792 / JCM 1419 / IAM 19013 / LMG 5710 / NBRC 13948 / NRRL B-527 / VKM B-1787 / 2291 / W).